We begin with the raw amino-acid sequence, 223 residues long: Peptidyl-tRNA hydrolase (223 aa).

A tRNA-binding site is contributed by Y16. Residue H21 is the Proton acceptor of the active site. 3 residues coordinate tRNA: F67, N69, and N113.

Belongs to the PTH family. Monomer.

The protein resides in the cytoplasm. The catalysed reaction is an N-acyl-L-alpha-aminoacyl-tRNA + H2O = an N-acyl-L-amino acid + a tRNA + H(+). Its function is as follows. Hydrolyzes ribosome-free peptidyl-tRNAs (with 1 or more amino acids incorporated), which drop off the ribosome during protein synthesis, or as a result of ribosome stalling. In terms of biological role, catalyzes the release of premature peptidyl moieties from peptidyl-tRNA molecules trapped in stalled 50S ribosomal subunits, and thus maintains levels of free tRNAs and 50S ribosomes. The polypeptide is Peptidyl-tRNA hydrolase (Helicobacter hepaticus (strain ATCC 51449 / 3B1)).